A 148-amino-acid chain; its full sequence is Putative pre-16S rRNA nuclease (148 aa).

Belongs to the YqgF nuclease family.

It is found in the cytoplasm. Could be a nuclease involved in processing of the 5'-end of pre-16S rRNA. The protein is Putative pre-16S rRNA nuclease of Nitrosomonas europaea (strain ATCC 19718 / CIP 103999 / KCTC 2705 / NBRC 14298).